A 1303-amino-acid polypeptide reads, in one-letter code: Serine/threonine-protein kinase ULK4 (1303 aa).

One can recognise a Protein kinase domain in the interval 4-280; it reads FVLYEEIGRG…WEGVLQHPFW (277 aa). Asp121 serves as the catalytic Proton acceptor. 2 disordered regions span residues 304–332 and 369–401; these read ECSG…AHRL and TSAM…GHLS. The span at 384 to 400 shows a compositional bias: polar residues; sequence SSPQKTSPLSKMTSGHL. HEAT repeat units lie at residues 504 to 543, 727 to 765, 796 to 834, 926 to 964, 1025 to 1063, 1105 to 1143, and 1151 to 1189; these read RLLH…HTTE, LIQE…HNRD, NEYL…RKHP, STVM…LLVS, LVEE…NLVA, STLL…DTQA, and SKPL…LYGG.

Belongs to the protein kinase superfamily. Ser/Thr protein kinase family. APG1/unc-51/ULK1 subfamily. As to expression, expressed in embryonic and adult brain. In the brain, widely expressed, with highest levels in layers II/III and V of the cortex, piriform cortex, CA1-3 of hippocampus, dentate gyrus, ependymal cells lining the ventricles and choroid plexus, and in the thalamic reticular nucleus (at protein level).

The enzyme catalyses L-seryl-[protein] + ATP = O-phospho-L-seryl-[protein] + ADP + H(+). The catalysed reaction is L-threonyl-[protein] + ATP = O-phospho-L-threonyl-[protein] + ADP + H(+). In terms of biological role, may be involved in the remodeling of cytoskeletal components, such as alpha-tubulin, and in this way regulates neurite branching and elongation, as well as cell motility. This is Serine/threonine-protein kinase ULK4 (Ulk4) from Mus musculus (Mouse).